The following is a 405-amino-acid chain: Nuclear hormone receptor family member nhr-199 (405 aa).

Residues Ile20–Gln111 constitute a DNA-binding region (nuclear receptor). NR C4-type zinc fingers lie at residues Cys23–Cys44 and Cys60–Cys94. The NR LBD domain maps to Arg126–Lys376.

Belongs to the nuclear hormone receptor family.

Its subcellular location is the nucleus. Orphan nuclear receptor. This chain is Nuclear hormone receptor family member nhr-199 (nhr-199), found in Caenorhabditis elegans.